The sequence spans 362 residues: E3 ubiquitin-protein ligase TM129 (362 aa).

At 1–6 the chain is on the lumenal side; the sequence is MDSPEV. The helical transmembrane segment at 7–27 threads the bilayer; sequence TFTLAYLVFAVCFVFTPNEFH. At 28–56 the chain is on the cytoplasmic side; the sequence is AAGLTVQNLLSGWLGSEDAAFVPFHLRRT. The helical transmembrane segment at 57–77 threads the bilayer; the sequence is AATLLCHSLLPLGYYVGMCLA. Residues 78–94 lie on the Lumenal side of the membrane; the sequence is ASEKRLHALSQAPEAWR. The helical transmembrane segment at 95-115 threads the bilayer; that stretch reads LFLLLAVTLPSIACILIYYWS. Topologically, residues 116-362 are cytoplasmic; sequence RDRWACHPLA…FCILDVCTVR (247 aa). Residues 285–350 form an RING-type; degenerate zinc finger; that stretch reads CIGCMQTRAS…ASRVPCPTCR (66 aa).

This sequence belongs to the TMEM129 family. As to quaternary structure, integral component of ER-resident dislocation complexes.

It localises to the endoplasmic reticulum membrane. The enzyme catalyses S-ubiquitinyl-[E2 ubiquitin-conjugating enzyme]-L-cysteine + [acceptor protein]-L-lysine = [E2 ubiquitin-conjugating enzyme]-L-cysteine + N(6)-ubiquitinyl-[acceptor protein]-L-lysine.. It participates in protein modification; protein ubiquitination. In terms of biological role, E3 ubiquitin-protein ligase involved in ER-associated protein degradation, preferentially associates with the E2 enzyme UBE2J2. Exploited by viral US11 proteins to mediate HLA class I proteins degradation. The sequence is that of E3 ubiquitin-protein ligase TM129 (TMEM129) from Homo sapiens (Human).